The following is a 305-amino-acid chain: Sulfate adenylyltransferase subunit 2 (305 aa).

The segment at 283 to 305 (RQGRVIDHDQSASMEKKKQEGYF) is disordered.

Belongs to the PAPS reductase family. CysD subfamily. In terms of assembly, heterodimer composed of CysD, the smaller subunit, and CysN.

The enzyme catalyses sulfate + ATP + H(+) = adenosine 5'-phosphosulfate + diphosphate. The protein operates within sulfur metabolism; hydrogen sulfide biosynthesis; sulfite from sulfate: step 1/3. Functionally, with CysN forms the ATP sulfurylase (ATPS) that catalyzes the adenylation of sulfate producing adenosine 5'-phosphosulfate (APS) and diphosphate, the first enzymatic step in sulfur assimilation pathway. APS synthesis involves the formation of a high-energy phosphoric-sulfuric acid anhydride bond driven by GTP hydrolysis by CysN coupled to ATP hydrolysis by CysD. This is Sulfate adenylyltransferase subunit 2 from Caulobacter sp. (strain K31).